A 279-amino-acid polypeptide reads, in one-letter code: Fatty acid metabolism regulator protein (279 aa).

One can recognise an HTH gntR-type domain in the interval 6–74; the sequence is KSPAGFAEKY…HGKPTKVNQF (69 aa). Positions 34–53 form a DNA-binding region, H-T-H motif; sequence ERELSELIGVTRTTLREVLQ.

As to quaternary structure, homodimer.

The protein resides in the cytoplasm. Functionally, multifunctional regulator of fatty acid metabolism. The protein is Fatty acid metabolism regulator protein of Vibrio vulnificus (strain CMCP6).